A 183-amino-acid chain; its full sequence is Lipid droplet coating protein Cap20 (183 aa).

This sequence belongs to the perilipin family.

It localises to the lipid droplet. Functionally, lipid droplet coating protein that regulates lipid metabolism, appressorial turgor pressure, and virulence. Appressorial turgor pressure is important for the mechanical penetration of the host cuticle during infection. This Colletotrichum gloeosporioides (Anthracnose fungus) protein is Lipid droplet coating protein Cap20 (Cap20).